Here is a 461-residue protein sequence, read N- to C-terminus: Kremen protein 2 (461 aa).

An N-terminal signal peptide occupies residues 1 to 24; that stretch reads MGTPHLQGFLLLFPLLLRLHGASA. Topologically, residues 25–363 are extracellular; it reads GSLHSPGLSE…SPKPGAAQAS (339 aa). The region spanning 34–118 is the Kringle domain; the sequence is ECFQVNGADY…YWRYCDIPTC (85 aa). Disulfide bonds link Cys-35–Cys-118, Cys-59–Cys-99, and Cys-88–Cys-113. Asn-48 carries N-linked (GlcNAc...) asparagine glycosylation. The WSC domain maps to 120–214; the sequence is MPGYLGCFVD…DGRLGIYEVS (95 aa). An intrachain disulfide couples Cys-218 to Cys-244. The CUB domain maps to 218–325; the sequence is CQGNWSAPQG…QGFALTYRGL (108 aa). N-linked (GlcNAc...) asparagine glycans are attached at residues Asn-221, Asn-243, and Asn-350. Positions 329–357 are disordered; that stretch reads VEGRASPEDSTESLAGDPDGANASCSPKP. Residues 364–386 traverse the membrane as a helical segment; that stretch reads IGARVFSTVTAFSVLLLLLLSLL. Topologically, residues 387-461 are cytoplasmic; the sequence is RLLRRRSCLL…SSLRSLVSAL (75 aa). Residues 429-452 are disordered; sequence CPPGDSQAEGPAAGYRPLSASSQS.

Interacts with ERLEC1. Forms a ternary complex with DKK1 and LRP6.

The protein localises to the membrane. Receptor for Dickkopf proteins. Cooperates with DKK1/2 to inhibit Wnt/beta-catenin signaling by promoting the endocytosis of Wnt receptors LRP5 and LRP6. Plays a role in limb development; attenuates Wnt signaling in the developing limb to allow normal limb patterning and can also negatively regulate bone formation. The chain is Kremen protein 2 (Kremen2) from Mus musculus (Mouse).